Here is a 197-residue protein sequence, read N- to C-terminus: Rac-like GTP-binding protein 6 (197 aa).

13–20 (GDGAVGKT) provides a ligand contact to GTP. The Effector region signature appears at 35–43 (YVPTVFDNF). GTP-binding positions include 60–64 (DTAGQ) and 118–121 (TKLD). Cysteine methyl ester is present on Cys-194. Cys-194 carries the S-geranylgeranyl cysteine lipid modification. A propeptide spans 195–197 (SIL) (removed in mature form).

It belongs to the small GTPase superfamily. Rho family.

Its subcellular location is the cytoplasm. It localises to the membrane. Its function is as follows. Inactive GDP-bound Rho GTPases reside in the cytosol, are found in a complex with Rho GDP-dissociation inhibitors (Rho GDIs), and are released from the GDI protein in order to translocate to membranes upon activation. The protein is Rac-like GTP-binding protein 6 (RAC6) of Oryza sativa subsp. japonica (Rice).